The primary structure comprises 411 residues: 1-deoxy-D-xylulose 5-phosphate reductoisomerase (411 aa).

NADPH contacts are provided by Thr12, Gly13, Ser14, Ile15, and Asn127. Lys128 lines the 1-deoxy-D-xylulose 5-phosphate pocket. Glu129 lines the NADPH pocket. Residue Asp153 coordinates Mn(2+). 1-deoxy-D-xylulose 5-phosphate contacts are provided by Ser154, Glu155, Ser189, and His212. Residue Glu155 participates in Mn(2+) binding. Gly218 provides a ligand contact to NADPH. The 1-deoxy-D-xylulose 5-phosphate site is built by Ser225, Asn230, Lys231, and Glu234. Residue Glu234 participates in Mn(2+) binding.

This sequence belongs to the DXR family. Requires Mg(2+) as cofactor. Mn(2+) is required as a cofactor.

The catalysed reaction is 2-C-methyl-D-erythritol 4-phosphate + NADP(+) = 1-deoxy-D-xylulose 5-phosphate + NADPH + H(+). It functions in the pathway isoprenoid biosynthesis; isopentenyl diphosphate biosynthesis via DXP pathway; isopentenyl diphosphate from 1-deoxy-D-xylulose 5-phosphate: step 1/6. Functionally, catalyzes the NADPH-dependent rearrangement and reduction of 1-deoxy-D-xylulose-5-phosphate (DXP) to 2-C-methyl-D-erythritol 4-phosphate (MEP). This chain is 1-deoxy-D-xylulose 5-phosphate reductoisomerase, found in Colwellia psychrerythraea (strain 34H / ATCC BAA-681) (Vibrio psychroerythus).